A 393-amino-acid polypeptide reads, in one-letter code: Protein TsgA (393 aa).

12 consecutive transmembrane segments (helical) span residues 11–31 (WISFLSYALTGALVIVTGMVM), 51–71 (FLNAGILISIFLNAWLMEIIP), 78–98 (FGFILMVLAVAGLMFSHSLAL), 101–121 (AAMFVLGLVSGITMSIGTFLI), 134–154 (LLFTDSFFSMAGMIFPMVAAF), 162–182 (WYWVYACIGLVYLAIFILTFG), 206–226 (IGVLFLAVAALCYILGQLGFI), 245–265 (ALVSDFWMSYMFGMWAFSFIL), 273–293 (ILTVLAGMAAVLMYLFITGTQ), 298–318 (WFILTLGFFSSAIYTSIITLG), 332–352 (FILTCGTIGTMLTFVVTGPIV), and 361–381 (LLTANGLYAVVFVMCFALGFV).

It belongs to the major facilitator superfamily. TsgA family.

Its subcellular location is the cell inner membrane. This Salmonella agona (strain SL483) protein is Protein TsgA.